The following is a 513-amino-acid chain: Maturase K (513 aa).

The protein belongs to the intron maturase 2 family. MatK subfamily.

It is found in the plastid. Its subcellular location is the chloroplast. In terms of biological role, usually encoded in the trnK tRNA gene intron. Probably assists in splicing its own and other chloroplast group II introns. This Molinia caerulea (Purple moor-grass) protein is Maturase K.